The chain runs to 346 residues: c-di-GMP synthase (346 aa).

Belongs to the CD-NTase family.

The enzyme catalyses 2 GTP = 3',3'-c-di-GMP + 2 diphosphate. In terms of biological role, cyclic nucleotide synthase (second messenger synthase) of a CBASS antivirus system. CBASS (cyclic oligonucleotide-based antiphage signaling system) provides immunity against bacteriophage. The CD-NTase protein synthesizes cyclic nucleotides in response to infection; these serve as specific second messenger signals. The signals activate a diverse range of effectors, leading to bacterial cell death and thus abortive phage infection. A type I-D(GG) CBASS system. Its function is as follows. Cyclic dinucleotide synthase that catalyzes the synthesis of c-di-GMP, has no activity with other NTP substrates. The polypeptide is c-di-GMP synthase (Lachnospiraceae bacterium (strain RUG226)).